A 333-amino-acid chain; its full sequence is Probable HTH-type transcriptional repressor ExuR (333 aa).

The 55-residue stretch at 2 to 56 (VTIKDIAKLANVSHTTVSRALNNSPYIKEHTKKKILELAEQLNYTPNVNAKSLAM) folds into the HTH lacI-type domain. Positions 4-23 (IKDIAKLANVSHTTVSRALN) form a DNA-binding region, H-T-H motif.

Its function is as follows. Transcriptional repressor for the exu locus which is required for galacturonate utilization. This chain is Probable HTH-type transcriptional repressor ExuR (exuR), found in Bacillus subtilis (strain 168).